The primary structure comprises 339 residues: MQALVNKIWYQGHPLRWLLLPLSWLFAVITYVRRALFRLGIKSQTAMPVPVIVVGNITVGGSGKTPTVIYLIELLRQHGFTPGVISRGYGVDIQGVKTVNLGASAAEVGDEPAMIVARTQVPMVVGAKRVDAANALIAEFGVDVIICDDGLQHYALGRDIELVVIDGQRGLGNGLLLPAGPLREGAWRLDAVDFIVNNGGPAAKGQFEMQLAPTEVKPVKCDVTSGEYSFDKSQPLVAMAGIGNPARFFESLRAQGYQLALCQGFDDHQAYDKTLLRDLAQDLPLLMTEKDAVKCRDFAQENWWYLAVNAKLSPQFDEQLLARLREVAAAKQGNFHGIR.

Threonine 58–threonine 65 provides a ligand contact to ATP.

It belongs to the LpxK family.

The enzyme catalyses a lipid A disaccharide + ATP = a lipid IVA + ADP + H(+). The protein operates within glycolipid biosynthesis; lipid IV(A) biosynthesis; lipid IV(A) from (3R)-3-hydroxytetradecanoyl-[acyl-carrier-protein] and UDP-N-acetyl-alpha-D-glucosamine: step 6/6. In terms of biological role, transfers the gamma-phosphate of ATP to the 4'-position of a tetraacyldisaccharide 1-phosphate intermediate (termed DS-1-P) to form tetraacyldisaccharide 1,4'-bis-phosphate (lipid IVA). This Shewanella baltica (strain OS155 / ATCC BAA-1091) protein is Tetraacyldisaccharide 4'-kinase.